A 122-amino-acid chain; its full sequence is Venom protein 7.1 (122 aa).

An N-terminal signal peptide occupies residues 1-19; sequence MRFSIISASLVLIFANVKA.

Contains 3 disulfide bonds. In terms of tissue distribution, expressed by the venom gland.

Its subcellular location is the secreted. The polypeptide is Venom protein 7.1 (Lychas mucronatus (Chinese swimming scorpion)).